A 1335-amino-acid polypeptide reads, in one-letter code: Phospholipid-transporting ATPase IK (1335 aa).

The Cytoplasmic segment spans residues 1–74 (MDGVHLGENL…LYEQFHRMSN (74 aa)). A helical transmembrane segment spans residues 75 to 95 (LYFLFIIILQGIPEISTLPWF). Topologically, residues 96–295 (TLFAPLVCLF…LDLMMNKLVA (200 aa)) are exoplasmic loop. A helical membrane pass occupies residues 296-316 (LIFLSLVIASLLLTVGFTFMV). At 317–339 (KQFKAKHYYMSPTHGRSDAMESF) the chain is on the cytoplasmic side. Residues 340–360 (FIFWGFLILLSVMVPMAMFII) traverse the membrane as a helical segment. At 361–917 (AEFIYLGNSI…YMRVCKFLRY (557 aa)) the chain is on the exoplasmic loop side. Aspartate 407 (4-aspartylphosphate intermediate) is an active-site residue. ATP is bound by residues aspartate 407, lysine 408, threonine 409, glutamate 504, phenylalanine 545, lysine 568, arginine 601, threonine 681, glycine 682, aspartate 683, arginine 831, and lysine 837. Aspartate 407 is a Mg(2+) binding site. Threonine 409 serves as a coordination point for Mg(2+). Position 857 (aspartate 857) interacts with Mg(2+). Residues asparagine 860 and aspartate 861 each coordinate ATP. A Mg(2+)-binding site is contributed by aspartate 861. A helical transmembrane segment spans residues 918–938 (FFYKTVASMMAQIWFSLVNGF). The Cytoplasmic segment spans residues 939 to 946 (SAQPLYEG). A helical membrane pass occupies residues 947–967 (WFLALFNLLYSTLPVLYIGLF). Residues 968–995 (EQDVTAEKSLKMPELYMAGQKGELFNYS) are Exoplasmic loop-facing. The helical transmembrane segment at 996-1016 (IFMQAITHGTITSMINFFVTV) threads the bilayer. The Cytoplasmic portion of the chain corresponds to 1017–1033 (MVSSDMSKAGSSHDYQS). The helical transmembrane segment at 1034-1054 (LGVLVAISSLLSVTLEVMLVV) threads the bilayer. Position 1055 (lysine 1055) is a topological domain, exoplasmic loop. The helical transmembrane segment at 1056–1076 (YWTLLFVGAVVLSLSSYVLMT) threads the bilayer. At 1077–1104 (SLTQSLWMYRISPKTFPFLFADYNVLFE) the chain is on the cytoplasmic side. Residues 1105-1125 (PCSLLLIVLNVALNVLPMLAL) form a helical membrane-spanning segment. At 1126–1335 (RTIHRTVLKQ…SQLEVPRKQS (210 aa)) the chain is on the exoplasmic loop side. Disordered regions lie at residues 1192–1215 (VDDSDGGTVCESLNPPEEDIPLQN), 1236–1280 (FGKG…GKLL), and 1314–1335 (SPLWRDSASSSPSQLEVPRKQS). Composition is skewed to polar residues over residues 1246–1255 (PNTSSQTMEK) and 1266–1276 (QKLPTTTSATS).

It belongs to the cation transport ATPase (P-type) (TC 3.A.3) family. Type IV subfamily. It depends on Mg(2+) as a cofactor. As to expression, expressed in testis, specifically in spermatids within seminiferous tubules (at protein level).

It is found in the cytoplasmic vesicle. The protein resides in the secretory vesicle. The protein localises to the acrosome membrane. Its subcellular location is the endoplasmic reticulum membrane. It catalyses the reaction ATP + H2O + phospholipidSide 1 = ADP + phosphate + phospholipidSide 2.. The catalysed reaction is a 1,2-diacyl-sn-glycero-3-phospho-L-serine(out) + ATP + H2O = a 1,2-diacyl-sn-glycero-3-phospho-L-serine(in) + ADP + phosphate + H(+). In terms of biological role, P4-ATPase flippase which catalyzes the hydrolysis of ATP coupled to the transport of aminophospholipids from the outer to the inner leaflet of various membranes and ensures the maintenance of asymmetric distribution of phospholipids. Phospholipid translocation also seems to be implicated in vesicle formation and in uptake of lipid signaling molecules. May be responsible for the maintenance of asymmetric distribution of phosphatidylserine (PS) in spermatozoa membranes. Involved in acrosome reactions and binding of spermatozoa to zona pellucida. The sequence is that of Phospholipid-transporting ATPase IK from Mus musculus (Mouse).